The primary structure comprises 67 residues: uncharacterized protein (67 aa).

This is an uncharacterized protein from Acidianus sp. F28 (AFV-2).